The sequence spans 309 residues: Taste receptor type 2 member 31 (309 aa).

Residues 1 to 2 are Extracellular-facing; it reads MT. A helical membrane pass occupies residues 3 to 23; the sequence is TFIPIIFSSLVVVIFVIGNFA. The Cytoplasmic portion of the chain corresponds to 24–55; it reads NGFIALVNSIEWFKRQKISFADQILTALAVSR. Residues 56-76 traverse the membrane as a helical segment; that stretch reads VGLLWVLLLNWYSTVLNPAFY. The Extracellular segment spans residues 77–100; that stretch reads SVEVRTTAYNVWAVTGHFSNWLAT. A helical membrane pass occupies residues 101–121; it reads SLSIFYLLKIANFSNLIFLHL. Residues 122 to 126 are Cytoplasmic-facing; that stretch reads KRRVK. The chain crosses the membrane as a helical span at residues 127 to 147; sequence SVILVMLLGPLLFLACQLFMI. Over 148-181 the chain is Extracellular; that stretch reads NMKEIVRTKEYEGNMTWKIKLRSAVYLSDATVTT. Residue N161 is glycosylated (N-linked (GlcNAc...) asparagine). Residues 182–202 form a helical membrane-spanning segment; the sequence is LGNLVPFTLTLLCFLLLICSL. Over 203–229 the chain is Cytoplasmic; the sequence is CKHLKKMQLHGKGSQDPSTKVHIKVLQ. A helical membrane pass occupies residues 230–250; it reads TVISFLLLCAIYFLSIMISVW. The Extracellular portion of the chain corresponds to 251–259; the sequence is SFGSLKNKP. A helical transmembrane segment spans residues 260–280; sequence VFMFCKAMRFSYPSIHPFILI. Topologically, residues 281–309 are cytoplasmic; it reads WGNKKLKQTFLSVLRQVRYWVKGEKPSSP.

It belongs to the G-protein coupled receptor T2R family.

The protein resides in the membrane. Receptor that may play a role in the perception of bitterness and is gustducin-linked. May play a role in sensing the chemical composition of the gastrointestinal content. The activity of this receptor may stimulate alpha gustducin, mediate PLC-beta-2 activation and lead to the gating of TRPM5. This chain is Taste receptor type 2 member 31 (TAS2R31), found in Pan troglodytes (Chimpanzee).